We begin with the raw amino-acid sequence, 630 residues long: Chaperone protein HtpG (630 aa).

The tract at residues 1 to 338 is a; substrate-binding; that stretch reads MTVEANKETL…SNDLSLNVSR (338 aa). The b stretch occupies residues 339-555; it reads EILQNDSTVE…QFDMGAQMKK (217 aa). A c region spans residues 556-630; the sequence is IMEAAGQKVP…LNRLLLELAN (75 aa).

It belongs to the heat shock protein 90 family. In terms of assembly, homodimer.

The protein resides in the cytoplasm. Functionally, molecular chaperone. Has ATPase activity. This Marinobacter nauticus (strain ATCC 700491 / DSM 11845 / VT8) (Marinobacter aquaeolei) protein is Chaperone protein HtpG.